Here is a 281-residue protein sequence, read N- to C-terminus: Pantothenate synthetase (281 aa).

30–37 contacts ATP; it reads MGYLHEGH. The active-site Proton donor is histidine 37. Glutamine 61 provides a ligand contact to (R)-pantoate. Glutamine 61 is a beta-alanine binding site. 147–150 serves as a coordination point for ATP; sequence GEKD. Residue glutamine 153 participates in (R)-pantoate binding. ATP is bound by residues isoleucine 176 and 184–187; that span reads KSSR.

Belongs to the pantothenate synthetase family. In terms of assembly, homodimer.

It is found in the cytoplasm. The enzyme catalyses (R)-pantoate + beta-alanine + ATP = (R)-pantothenate + AMP + diphosphate + H(+). The protein operates within cofactor biosynthesis; (R)-pantothenate biosynthesis; (R)-pantothenate from (R)-pantoate and beta-alanine: step 1/1. Its function is as follows. Catalyzes the condensation of pantoate with beta-alanine in an ATP-dependent reaction via a pantoyl-adenylate intermediate. The sequence is that of Pantothenate synthetase from Clostridium botulinum (strain Okra / Type B1).